The following is a 151-amino-acid chain: uncharacterized protein (151 aa).

This is an uncharacterized protein from Homo sapiens (Human).